A 248-amino-acid polypeptide reads, in one-letter code: PF03932 family protein CutC (248 aa).

The protein belongs to the CutC family. Homodimer.

It is found in the cytoplasm. The chain is PF03932 family protein CutC from Shigella boydii serotype 18 (strain CDC 3083-94 / BS512).